Here is a 236-residue protein sequence, read N- to C-terminus: MSHVSQETAQEISEEREARAIVYNFLSSLFAKEVTSDLVAQLTSAQGQSFLKSLALDPSLSASVNEINTKLVKLNSKESLLELAADFCGLFLVDGRTSVSPYAGQYLSVEQGGEPSEKLSNAAINESGSKSKKNKAQLFGELHQQMTEFLTDNKLQIHSDFPEPGDHIAVILAYIAHLCVTSGSEQQLNFINSYLMTWLSDFTQQVNKHDHGQFYCFVADLTFEWLKVDTEFLLSD.

The protein belongs to the TorD/DmsD family. TorD subfamily.

Its subcellular location is the cytoplasm. In terms of biological role, involved in the biogenesis of TorA. Acts on TorA before the insertion of the molybdenum cofactor and, as a result, probably favors a conformation of the apoenzyme that is competent for acquiring the cofactor. The chain is Chaperone protein TorD from Colwellia psychrerythraea (strain 34H / ATCC BAA-681) (Vibrio psychroerythus).